Consider the following 214-residue polypeptide: Nodulation protein A (214 aa).

The protein belongs to the NodA family.

Its subcellular location is the cytoplasm. In terms of biological role, N-acyltransferase required for nodulation. Acts in the production of a small, heat-stable compound (Nod) that stimulates mitosis in various plant protoplasts. In Methylobacterium nodulans (strain LMG 21967 / CNCM I-2342 / ORS 2060), this protein is Nodulation protein A.